The primary structure comprises 452 residues: NADH-ubiquinone oxidoreductase chain 4 (452 aa).

Helical transmembrane passes span 4-24, 29-49, 59-79, 88-110, 114-136, 144-164, 182-202, 221-241, 252-272, 282-304, 309-331, 345-365, 390-410, and 432-452; these read LVLG…SMVW, VGSV…MTIS, FVSL…LLAS, LIYQ…LAFM, LLLF…TRWG, AGTY…ICLI, VFQL…AFLV, PIAG…YGMM, MLSS…MGGI, LIAY…GVAW, AMVL…NLWY, LIMI…MNMA, IVYM…LFGM, and LLTT…GLMF.

It belongs to the complex I subunit 4 family.

The protein resides in the mitochondrion membrane. The enzyme catalyses a ubiquinone + NADH + 5 H(+)(in) = a ubiquinol + NAD(+) + 4 H(+)(out). Its function is as follows. Core subunit of the mitochondrial membrane respiratory chain NADH dehydrogenase (Complex I) that is believed to belong to the minimal assembly required for catalysis. Complex I functions in the transfer of electrons from NADH to the respiratory chain. The immediate electron acceptor for the enzyme is believed to be ubiquinone. The chain is NADH-ubiquinone oxidoreductase chain 4 (ND4) from Branchiostoma floridae (Florida lancelet).